A 342-amino-acid chain; its full sequence is Cell division protein FtsQ (342 aa).

Over 1–80 the chain is Cytoplasmic; that stretch reads MDGAGSLTRS…ALVERYLPRR (80 aa). The helical transmembrane segment at 81–99 threads the bilayer; it reads VGISMTVLLLIGSCGFGIV. Topologically, residues 100-342 are periplasmic; that stretch reads KGGHLQDFVT…KKKKKAGDAA (243 aa). Residues 124 to 192 form the POTRA domain; it reads FRITSVVING…GQLMIELTER (69 aa).

The protein belongs to the FtsQ/DivIB family. FtsQ subfamily.

It localises to the cell inner membrane. Essential cell division protein. The sequence is that of Cell division protein FtsQ from Bradyrhizobium diazoefficiens (strain JCM 10833 / BCRC 13528 / IAM 13628 / NBRC 14792 / USDA 110).